The sequence spans 192 residues: Shikimate kinase (192 aa).

26–31 is an ATP binding site; sequence ASGKSS. A Mg(2+)-binding site is contributed by Ser30. Positions 48, 72, and 94 each coordinate substrate. Arg132 serves as a coordination point for ATP. Arg151 is a binding site for substrate.

The protein belongs to the shikimate kinase family. As to quaternary structure, monomer. It depends on Mg(2+) as a cofactor.

It localises to the cytoplasm. The enzyme catalyses shikimate + ATP = 3-phosphoshikimate + ADP + H(+). It functions in the pathway metabolic intermediate biosynthesis; chorismate biosynthesis; chorismate from D-erythrose 4-phosphate and phosphoenolpyruvate: step 5/7. Its function is as follows. Catalyzes the specific phosphorylation of the 3-hydroxyl group of shikimic acid using ATP as a cosubstrate. The sequence is that of Shikimate kinase from Prochlorococcus marinus (strain MIT 9313).